The primary structure comprises 257 residues: Na(+)-translocating NADH-quinone reductase subunit C (257 aa).

A helical membrane pass occupies residues 12–32 (LFVVIALSLVCSIIVSAAAVG). At Thr225 the chain carries FMN phosphoryl threonine.

The protein belongs to the NqrC family. Composed of six subunits; NqrA, NqrB, NqrC, NqrD, NqrE and NqrF. The cofactor is FMN.

The protein localises to the cell inner membrane. It carries out the reaction a ubiquinone + n Na(+)(in) + NADH + H(+) = a ubiquinol + n Na(+)(out) + NAD(+). Its function is as follows. NQR complex catalyzes the reduction of ubiquinone-1 to ubiquinol by two successive reactions, coupled with the transport of Na(+) ions from the cytoplasm to the periplasm. NqrA to NqrE are probably involved in the second step, the conversion of ubisemiquinone to ubiquinol. The protein is Na(+)-translocating NADH-quinone reductase subunit C of Vibrio cholerae serotype O1 (strain ATCC 39541 / Classical Ogawa 395 / O395).